Reading from the N-terminus, the 176-residue chain is Putative L,D-transpeptidase YqjB (176 aa).

Residues 1 to 25 form the signal peptide; that stretch reads MRFFLCSIFMMISPIWPLGENPLPG. The L,D-TPase catalytic domain maps to 27–151; that stretch reads PYVIVNKRTN…IPVGTRVLIT (125 aa). The active-site Proton donor/acceptor is the histidine 111. The Nucleophile role is filled by cysteine 127.

This sequence belongs to the YkuD family.

It functions in the pathway cell wall biogenesis; peptidoglycan biosynthesis. The protein is Putative L,D-transpeptidase YqjB (yqjB) of Bacillus subtilis (strain 168).